The primary structure comprises 588 residues: 2-succinyl-5-enolpyruvyl-6-hydroxy-3-cyclohexene-1-carboxylate synthase (588 aa).

It belongs to the TPP enzyme family. MenD subfamily. In terms of assembly, homodimer. Requires Mg(2+) as cofactor. The cofactor is Mn(2+). Thiamine diphosphate is required as a cofactor.

It catalyses the reaction isochorismate + 2-oxoglutarate + H(+) = 5-enolpyruvoyl-6-hydroxy-2-succinyl-cyclohex-3-ene-1-carboxylate + CO2. It participates in quinol/quinone metabolism; 1,4-dihydroxy-2-naphthoate biosynthesis; 1,4-dihydroxy-2-naphthoate from chorismate: step 2/7. It functions in the pathway cofactor biosynthesis; phylloquinone biosynthesis. Functionally, catalyzes the thiamine diphosphate-dependent decarboxylation of 2-oxoglutarate and the subsequent addition of the resulting succinic semialdehyde-thiamine pyrophosphate anion to isochorismate to yield 2-succinyl-5-enolpyruvyl-6-hydroxy-3-cyclohexene-1-carboxylate (SEPHCHC). This is 2-succinyl-5-enolpyruvyl-6-hydroxy-3-cyclohexene-1-carboxylate synthase from Prochlorococcus marinus (strain MIT 9515).